The following is a 308-amino-acid chain: 4-hydroxy-tetrahydrodipicolinate synthase (308 aa).

Thr56 provides a ligand contact to pyruvate. Tyr144 serves as the catalytic Proton donor/acceptor. The active-site Schiff-base intermediate with substrate is the Lys172. A pyruvate-binding site is contributed by Val212.

Belongs to the DapA family. As to quaternary structure, homotetramer; dimer of dimers.

It is found in the cytoplasm. The catalysed reaction is L-aspartate 4-semialdehyde + pyruvate = (2S,4S)-4-hydroxy-2,3,4,5-tetrahydrodipicolinate + H2O + H(+). Its pathway is amino-acid biosynthesis; L-lysine biosynthesis via DAP pathway; (S)-tetrahydrodipicolinate from L-aspartate: step 3/4. Functionally, catalyzes the condensation of (S)-aspartate-beta-semialdehyde [(S)-ASA] and pyruvate to 4-hydroxy-tetrahydrodipicolinate (HTPA). This Kineococcus radiotolerans (strain ATCC BAA-149 / DSM 14245 / SRS30216) protein is 4-hydroxy-tetrahydrodipicolinate synthase.